We begin with the raw amino-acid sequence, 315 residues long: Homoserine kinase (315 aa).

97-107 provides a ligand contact to ATP; the sequence is PPARGLGSSAT.

This sequence belongs to the GHMP kinase family. Homoserine kinase subfamily.

The protein localises to the cytoplasm. The enzyme catalyses L-homoserine + ATP = O-phospho-L-homoserine + ADP + H(+). It functions in the pathway amino-acid biosynthesis; L-threonine biosynthesis; L-threonine from L-aspartate: step 4/5. Its function is as follows. Catalyzes the ATP-dependent phosphorylation of L-homoserine to L-homoserine phosphate. This is Homoserine kinase from Prochlorococcus marinus (strain NATL1A).